The sequence spans 284 residues: NAD kinase (284 aa).

Aspartate 60 acts as the Proton acceptor in catalysis. NAD(+) is bound by residues 60-61, 134-135, lysine 145, arginine 162, aspartate 164, and glutamine 235; these read DG and ND.

Belongs to the NAD kinase family. A divalent metal cation is required as a cofactor.

The protein resides in the cytoplasm. It carries out the reaction NAD(+) + ATP = ADP + NADP(+) + H(+). Involved in the regulation of the intracellular balance of NAD and NADP, and is a key enzyme in the biosynthesis of NADP. Catalyzes specifically the phosphorylation on 2'-hydroxyl of the adenosine moiety of NAD to yield NADP. This chain is NAD kinase, found in Treponema denticola (strain ATCC 35405 / DSM 14222 / CIP 103919 / JCM 8153 / KCTC 15104).